Here is a 228-residue protein sequence, read N- to C-terminus: Large ribosomal subunit protein bL25 (228 aa).

The segment at M1–R24 is disordered.

The protein belongs to the bacterial ribosomal protein bL25 family. CTC subfamily. In terms of assembly, part of the 50S ribosomal subunit; part of the 5S rRNA/L5/L18/L25 subcomplex. Contacts the 5S rRNA. Binds to the 5S rRNA independently of L5 and L18.

This is one of the proteins that binds to the 5S RNA in the ribosome where it forms part of the central protuberance. The polypeptide is Large ribosomal subunit protein bL25 (Nitrobacter winogradskyi (strain ATCC 25391 / DSM 10237 / CIP 104748 / NCIMB 11846 / Nb-255)).